The primary structure comprises 120 residues: MDVKMTIAIRGDLKISCGKAAAQAGHAAVECVLAAMGDAKWRKWLDQWLEEGQKKIVLTADDAAHLYQLHERAKSLGLPTAVVIDAGLTELPPGTPTAICVGPAPDELVDKVTGSLKLYK.

It belongs to the PTH2 family.

It is found in the cytoplasm. The enzyme catalyses an N-acyl-L-alpha-aminoacyl-tRNA + H2O = an N-acyl-L-amino acid + a tRNA + H(+). In terms of biological role, the natural substrate for this enzyme may be peptidyl-tRNAs which drop off the ribosome during protein synthesis. The chain is Peptidyl-tRNA hydrolase from Pyrobaculum aerophilum (strain ATCC 51768 / DSM 7523 / JCM 9630 / CIP 104966 / NBRC 100827 / IM2).